Reading from the N-terminus, the 356-residue chain is Putative aminopeptidase FrvX (356 aa).

A divalent metal cation is bound by residues His-61 and Asp-175. Glu-205 acts as the Proton acceptor in catalysis. Glu-206, Asp-228, and His-316 together coordinate a divalent metal cation.

The protein belongs to the peptidase M42 family. The cofactor is a divalent metal cation.

This is Putative aminopeptidase FrvX (frvX) from Escherichia coli (strain K12).